Here is a 414-residue protein sequence, read N- to C-terminus: Testis-specific Y-encoded-like protein 4 (414 aa).

Disordered stretches follow at residues 1-129 (MSGL…AGQK) and 391-414 (PRRG…FQSG). Basic and acidic residues predominate over residues 24-40 (ASGDPDRDQCQGLREET). Residues 101-112 (EAASAAEAADSS) are compositionally biased toward low complexity.

This sequence belongs to the nucleosome assembly protein (NAP) family.

In Homo sapiens (Human), this protein is Testis-specific Y-encoded-like protein 4 (TSPYL4).